We begin with the raw amino-acid sequence, 357 residues long: MSTNPIQPLLDVLYQGKSLSREQTAELFGALIRGEMSEAAMAGMLVALKMRGETIDEISGAADAMRAAAKPFPCPERNNNPLHNGIVDIVGTGGDGFNTINISTTAAFVAAAAGAKVAKHGNRSVSSKSGSSDLLAQFGIDLTMSPETASRCLDALNLCFLFAPHYHGGVKHAVPVRQALKTRTLFNVLGPLINPARPEFMLLGVYSPELVLPIAKVLKALGTKRAMVVHGSGLDEVALHGNTQVAELKDGDIIEYQLTPADLGVPLAQISDLEGGEPAQNALITEAILKGRGTEAHANAVAINAGCALYVCGITDSVKAGTLLALATIQSGKAFELLSQLAKVSGEALVNGQERGR.

Residues Gly-91, 94–95 (GD), Thr-99, 101–104 (NIST), 119–127 (KHGNRSVSS), and Ser-131 contribute to the 5-phospho-alpha-D-ribose 1-diphosphate site. Gly-91 is a binding site for anthranilate. Ser-103 is a Mg(2+) binding site. Residue Asn-122 coordinates anthranilate. Residue Arg-177 participates in anthranilate binding. Mg(2+)-binding residues include Asp-235 and Glu-236.

The protein belongs to the anthranilate phosphoribosyltransferase family. In terms of assembly, homodimer. The cofactor is Mg(2+).

It catalyses the reaction N-(5-phospho-beta-D-ribosyl)anthranilate + diphosphate = 5-phospho-alpha-D-ribose 1-diphosphate + anthranilate. It functions in the pathway amino-acid biosynthesis; L-tryptophan biosynthesis; L-tryptophan from chorismate: step 2/5. Catalyzes the transfer of the phosphoribosyl group of 5-phosphorylribose-1-pyrophosphate (PRPP) to anthranilate to yield N-(5'-phosphoribosyl)-anthranilate (PRA). The chain is Anthranilate phosphoribosyltransferase from Shewanella baltica (strain OS155 / ATCC BAA-1091).